An 873-amino-acid chain; its full sequence is Protein SEY1 (873 aa).

The Cytoplasmic portion of the chain corresponds to 1 to 750 (MVANGHFFAG…KRSAIGGITQ (750 aa)). Positions 50 to 308 (GFNYHLISVF…IPADGFAVYA (259 aa)) constitute a GB1/RHD3-type G domain. 60–67 (GSQSTGKS) provides a ligand contact to GTP. The disordered stretch occupies residues 677 to 701 (LDKWIGHTPSSATPADEEDLTPIGG). Residues 691–701 (ADEEDLTPIGG) show a composition bias toward acidic residues. Residues 751–771 (VPLYFYGLLLALGWNEIVAVL) form a helical membrane-spanning segment. The Lumenal portion of the chain corresponds to 772-774 (RNP). The chain crosses the membrane as a helical span at residues 775-795 (AYFLLLFVCAVTAYVTYQLNL). Residues 796–873 (WGPIIKMTEA…IDDADDDDDF (78 aa)) are Cytoplasmic-facing. Positions 841 to 873 (EGYDMSNMKNRKSAGGYQNNRSHIDDADDDDDF) are disordered.

Belongs to the TRAFAC class dynamin-like GTPase superfamily. GB1/RHD3 GTPase family. RHD3 subfamily.

The protein localises to the endoplasmic reticulum membrane. Functionally, cooperates with the reticulon proteins and tubule-shaping DP1 family proteins to generate and maintain the structure of the tubular endoplasmic reticulum network. Has GTPase activity, which is required for its function in ER organization. The protein is Protein SEY1 of Paracoccidioides lutzii (strain ATCC MYA-826 / Pb01) (Paracoccidioides brasiliensis).